The sequence spans 59 residues: Cecropin-C type 2 (59 aa).

The signal sequence occupies residues 1 to 23 (MNFAKVFVLVAMAVLLLVGQSEA).

It belongs to the cecropin family.

It localises to the secreted. In terms of biological role, cecropins have lytic and antibacterial activity against several Gram-positive and Gram-negative bacteria. This Aedes albopictus (Asian tiger mosquito) protein is Cecropin-C type 2 (CECC2).